A 168-amino-acid polypeptide reads, in one-letter code: Quinol oxidase subunit 2 (168 aa).

The helical transmembrane segment at 9–31 (EVWFIVMLVLVLIFFSWNVYYLS) threads the bilayer.

The protein belongs to the cytochrome c oxidase subunit 2 family.

It localises to the cell membrane. The catalysed reaction is 2 a quinol + O2 = 2 a quinone + 2 H2O. In terms of biological role, the terminal oxidase is the component of the respiratory chain that catalyzes the reduction of oxygen to water. Subunits 1-3 form the functional core of the enzyme complex. Subunit 2 transfers the electrons from caldariella quinol to the bimetallic center of the catalytic subunit 1 that is formed by heme A3 and Cu(B). In Sulfolobus acidocaldarius (strain ATCC 33909 / DSM 639 / JCM 8929 / NBRC 15157 / NCIMB 11770), this protein is Quinol oxidase subunit 2 (soxA).